The following is a 346-amino-acid chain: Holliday junction branch migration complex subunit RuvB (346 aa).

Residues 1–11 (MTEQRTIASSA) show a composition bias toward polar residues. The segment at 1–20 (MTEQRTIASSATREDEAADA) is disordered. The large ATPase domain (RuvB-L) stretch occupies residues 1–183 (MTEQRTIASS…FGIVQRLEFY (183 aa)). Residues isoleucine 22, arginine 23, glycine 64, lysine 67, threonine 68, threonine 69, 130-132 (EDF), arginine 173, tyrosine 183, and arginine 220 each bind ATP. Threonine 68 contacts Mg(2+). A small ATPAse domain (RuvB-S) region spans residues 184–254 (SPQELTRIVI…VAQAAMQMLK (71 aa)). Positions 257-346 (PEGFDELDRR…PAIGEPGDLF (90 aa)) are head domain (RuvB-H). Residues arginine 293, arginine 312, and arginine 317 each contribute to the DNA site.

It belongs to the RuvB family. In terms of assembly, homohexamer. Forms an RuvA(8)-RuvB(12)-Holliday junction (HJ) complex. HJ DNA is sandwiched between 2 RuvA tetramers; dsDNA enters through RuvA and exits via RuvB. An RuvB hexamer assembles on each DNA strand where it exits the tetramer. Each RuvB hexamer is contacted by two RuvA subunits (via domain III) on 2 adjacent RuvB subunits; this complex drives branch migration. In the full resolvosome a probable DNA-RuvA(4)-RuvB(12)-RuvC(2) complex forms which resolves the HJ.

It localises to the cytoplasm. It catalyses the reaction ATP + H2O = ADP + phosphate + H(+). In terms of biological role, the RuvA-RuvB-RuvC complex processes Holliday junction (HJ) DNA during genetic recombination and DNA repair, while the RuvA-RuvB complex plays an important role in the rescue of blocked DNA replication forks via replication fork reversal (RFR). RuvA specifically binds to HJ cruciform DNA, conferring on it an open structure. The RuvB hexamer acts as an ATP-dependent pump, pulling dsDNA into and through the RuvAB complex. RuvB forms 2 homohexamers on either side of HJ DNA bound by 1 or 2 RuvA tetramers; 4 subunits per hexamer contact DNA at a time. Coordinated motions by a converter formed by DNA-disengaged RuvB subunits stimulates ATP hydrolysis and nucleotide exchange. Immobilization of the converter enables RuvB to convert the ATP-contained energy into a lever motion, pulling 2 nucleotides of DNA out of the RuvA tetramer per ATP hydrolyzed, thus driving DNA branch migration. The RuvB motors rotate together with the DNA substrate, which together with the progressing nucleotide cycle form the mechanistic basis for DNA recombination by continuous HJ branch migration. Branch migration allows RuvC to scan DNA until it finds its consensus sequence, where it cleaves and resolves cruciform DNA. This chain is Holliday junction branch migration complex subunit RuvB, found in Xanthomonas campestris pv. campestris (strain B100).